Here is a 310-residue protein sequence, read N- to C-terminus: Aspartate carbamoyltransferase catalytic subunit (310 aa).

Carbamoyl phosphate contacts are provided by arginine 58 and threonine 59. Lysine 86 provides a ligand contact to L-aspartate. Carbamoyl phosphate is bound by residues arginine 108, histidine 136, and glutamine 139. Arginine 169 and arginine 224 together coordinate L-aspartate. Carbamoyl phosphate contacts are provided by glycine 265 and proline 266.

Belongs to the aspartate/ornithine carbamoyltransferase superfamily. ATCase family. Heterododecamer (2C3:3R2) of six catalytic PyrB chains organized as two trimers (C3), and six regulatory PyrI chains organized as three dimers (R2).

It carries out the reaction carbamoyl phosphate + L-aspartate = N-carbamoyl-L-aspartate + phosphate + H(+). Its pathway is pyrimidine metabolism; UMP biosynthesis via de novo pathway; (S)-dihydroorotate from bicarbonate: step 2/3. In terms of biological role, catalyzes the condensation of carbamoyl phosphate and aspartate to form carbamoyl aspartate and inorganic phosphate, the committed step in the de novo pyrimidine nucleotide biosynthesis pathway. The chain is Aspartate carbamoyltransferase catalytic subunit from Citrifermentans bemidjiense (strain ATCC BAA-1014 / DSM 16622 / JCM 12645 / Bem) (Geobacter bemidjiensis).